Here is a 338-residue protein sequence, read N- to C-terminus: Ketol-acid reductoisomerase (NADP(+)) (338 aa).

Residues 1–181 (MQVYYDKDCD…GGGRTGIIET (181 aa)) form the KARI N-terminal Rossmann domain. Residues 24–27 (FGSQ), arginine 47, serine 50, serine 52, and 82–85 (DEFQ) contribute to the NADP(+) site. The active site involves histidine 107. Glycine 133 is a binding site for NADP(+). The 146-residue stretch at 182–327 (TFKDETETDL…EKLRSMMPWI (146 aa)) folds into the KARI C-terminal knotted domain. Mg(2+)-binding residues include aspartate 190, glutamate 194, glutamate 226, and glutamate 230. A substrate-binding site is contributed by serine 251.

Belongs to the ketol-acid reductoisomerase family. Requires Mg(2+) as cofactor.

It carries out the reaction (2R)-2,3-dihydroxy-3-methylbutanoate + NADP(+) = (2S)-2-acetolactate + NADPH + H(+). The catalysed reaction is (2R,3R)-2,3-dihydroxy-3-methylpentanoate + NADP(+) = (S)-2-ethyl-2-hydroxy-3-oxobutanoate + NADPH + H(+). It participates in amino-acid biosynthesis; L-isoleucine biosynthesis; L-isoleucine from 2-oxobutanoate: step 2/4. The protein operates within amino-acid biosynthesis; L-valine biosynthesis; L-valine from pyruvate: step 2/4. In terms of biological role, involved in the biosynthesis of branched-chain amino acids (BCAA). Catalyzes an alkyl-migration followed by a ketol-acid reduction of (S)-2-acetolactate (S2AL) to yield (R)-2,3-dihydroxy-isovalerate. In the isomerase reaction, S2AL is rearranged via a Mg-dependent methyl migration to produce 3-hydroxy-3-methyl-2-ketobutyrate (HMKB). In the reductase reaction, this 2-ketoacid undergoes a metal-dependent reduction by NADPH to yield (R)-2,3-dihydroxy-isovalerate. This chain is Ketol-acid reductoisomerase (NADP(+)), found in Marinobacter nauticus (strain ATCC 700491 / DSM 11845 / VT8) (Marinobacter aquaeolei).